The primary structure comprises 462 residues: Chromosomal replication initiator protein DnaA (462 aa).

The interval 1-83 (MSLSLWQQCL…LRFEVGSKPA (83 aa)) is domain I, interacts with DnaA modulators. Positions 83–125 (AVRAHSHPVTASVSAPVAPVTRSAPVRPSWDSSPAQPELSYRS) are domain II. The segment at 105-127 (SAPVRPSWDSSPAQPELSYRSNV) is disordered. Residues 112-127 (WDSSPAQPELSYRSNV) show a composition bias toward polar residues. The segment at 126–342 (NVNPKHTFDN…GALNRVIANA (217 aa)) is domain III, AAA+ region. G170, G172, K173, and T174 together coordinate ATP. A domain IV, binds dsDNA region spans residues 343 to 462 (NFTGRAITID…FSNLIRTLSS (120 aa)).

It belongs to the DnaA family. As to quaternary structure, oligomerizes as a right-handed, spiral filament on DNA at oriC.

The protein resides in the cytoplasm. Functionally, plays an essential role in the initiation and regulation of chromosomal replication. ATP-DnaA binds to the origin of replication (oriC) to initiate formation of the DNA replication initiation complex once per cell cycle. Binds the DnaA box (a 9 base pair repeat at the origin) and separates the double-stranded (ds)DNA. Forms a right-handed helical filament on oriC DNA; dsDNA binds to the exterior of the filament while single-stranded (ss)DNA is stabiized in the filament's interior. The ATP-DnaA-oriC complex binds and stabilizes one strand of the AT-rich DNA unwinding element (DUE), permitting loading of DNA polymerase. After initiation quickly degrades to an ADP-DnaA complex that is not apt for DNA replication. Binds acidic phospholipids. This chain is Chromosomal replication initiator protein DnaA, found in Yersinia enterocolitica serotype O:8 / biotype 1B (strain NCTC 13174 / 8081).